The sequence spans 923 residues: Smoothelin (923 aa).

The residue at position 2 (alanine 2) is an N-acetylalanine. A coiled-coil region spans residues 24 to 89; that stretch reads LAERRRIRSA…ARLAGRLESM (66 aa). The segment at 134–456 is disordered; sequence SRLPSSGPRE…GTGEPGGSMK (323 aa). Composition is skewed to low complexity over residues 164-179 and 192-205; these read QEQQTEVLEPTPTPED and RAPPGGRPSSPASP. Residues 237 to 252 are compositionally biased toward pro residues; it reads LPHPSEAPSPEPPMSP. Composition is skewed to polar residues over residues 272-285 and 293-314; these read PSDTLDSIRGFSNT and TKSCQRSLSVLSPRQPTPNREP. Phosphoserine occurs at positions 299, 301, 304, and 340. A phosphothreonine mark is found at threonine 359 and threonine 372. Positions 366–389 are enriched in low complexity; the sequence is PSLISTTPASSSSSNSSSPSPSDT. Residues serine 501, serine 521, and serine 574 each carry the phosphoserine modification. 2 disordered regions span residues 542–578 and 615–772; these read KMEPDPAEPPSTTVEAANGAEQARVDKGPEGRSPLSA and QRKR…ARKA. Residues 601-628 adopt a coiled-coil conformation; sequence EERKLIRAALRELRQRKRDQRDKERERR. Residues 615–638 are compositionally biased toward basic and acidic residues; the sequence is QRKRDQRDKERERRLREARARPGE. At serine 641 the chain carries Phosphoserine. Residues 674–687 are compositionally biased toward polar residues; sequence NDGTQTARTTTVES. Residues 697–721 show a composition bias toward low complexity; sequence SSSSSTTTTTVQTKSFSSSSSSSSS. Serine 735 bears the Phosphoserine mark. A compositionally biased stretch (basic and acidic residues) spans 744–756; it reads LERRQAEKKKELM. At serine 798 the chain carries Phosphoserine. In terms of domain architecture, Calponin-homology (CH) spans 805–912; sequence NSIKQMLLDW…YVQSLYNHLR (108 aa).

Belongs to the smoothelin family.

Its subcellular location is the cytoplasm. The protein localises to the cytoskeleton. Functionally, structural protein of the cytoskeleton. The protein is Smoothelin (Smtn) of Mus musculus (Mouse).